The primary structure comprises 230 residues: MKKLEALLENSFNIRFDDKRLLETAFTHTSYANEHRLLNISHNERLEFLGDAVLQLIISEYLFAKYPKQTEGDMSKLRSTIVREESLAGFSRYCSFDAYIKLGKGEEKSGGRHRDTILGDLFEAFLGALLLDKGIEEVRRFLNQVMIPQVEQGTFEKVKDYKTCLQELLQAKGDVVIDYQVISETGPAHAKQFEVAVLVDEDRLSKGTGRSKKLAEQDAAKNALAQLSEV.

The 130-residue stretch at 5–134 folds into the RNase III domain; it reads EALLENSFNI…FLGALLLDKG (130 aa). Glutamate 47 is a binding site for Mg(2+). The active site involves aspartate 51. Aspartate 120 and glutamate 123 together coordinate Mg(2+). The active site involves glutamate 123. The region spanning 160–229 is the DRBM domain; it reads DYKTCLQELL…AKNALAQLSE (70 aa).

Belongs to the ribonuclease III family. Homodimer. Requires Mg(2+) as cofactor.

It localises to the cytoplasm. It carries out the reaction Endonucleolytic cleavage to 5'-phosphomonoester.. Digests double-stranded RNA. Involved in the processing of primary rRNA transcript to yield the immediate precursors to the large and small rRNAs (23S and 16S). Processes some mRNAs, and tRNAs when they are encoded in the rRNA operon. Processes pre-crRNA and tracrRNA of type II CRISPR loci if present in the organism. The polypeptide is Ribonuclease 3 (Streptococcus equi subsp. zooepidemicus (strain H70)).